Here is a 448-residue protein sequence, read N- to C-terminus: Iroquois-class homeodomain protein irx-3 (448 aa).

Positions 108–170 (DPSRPKNATR…NARRRLKKEN (63 aa)) form a DNA-binding region, homeobox; TALE-type. Disordered stretches follow at residues 171–250 (KMTW…NAPE) and 387–410 (SGTASFPKAAEPKHSTDSLTDRSS). The segment covering 195–222 (KHEDDEEIDLENIDTEDIESKEDLDDPD) has biased composition (acidic residues). Basic and acidic residues predominate over residues 223 to 237 (TDIHSDSKTDARSDS). The span at 238–248 (EASDGFEDLNA) shows a compositional bias: acidic residues. Positions 396-406 (AEPKHSTDSLT) are enriched in basic and acidic residues.

Belongs to the TALE/IRO homeobox family. In terms of tissue distribution, expressed in the neural plate in overlapping patterns with other irx members, which all share an anterior border of expression. Outside the nervous system and at tailbud stages, expressed in the developing otic vesicle, branchial arches, prospective heart region and pronephros.

It is found in the nucleus. Acts partially redundantly with other irx members in neural patterning. Required for formation of the posterior forebrain, midbrain, hindbrain, and to a lesser extent, spinal cord. Both up-regulates and down-regulates gene expression during neural development. Acts early in neural plate development to induce proneural gene expression and specify a neural precursor state. Also up-regulates repressors that prevent neuronal differentiation. Required during at least two stages of pronephros kidney development; during neurula stages, maintains transcription of key renal genes to define the size and identity of the pronephric anlage, probably in part through regulation of bmp-signaling. Subsequently required for proper formation of the intermediate tubule segment of the pronephros. The polypeptide is Iroquois-class homeodomain protein irx-3 (Xenopus tropicalis (Western clawed frog)).